A 291-amino-acid chain; its full sequence is ATP synthase subunit b 2 (291 aa).

Residues 2 to 22 (LIDGFTVVAQIVNFLILVWLL) form a helical membrane-spanning segment.

This sequence belongs to the ATPase B chain family. F-type ATPases have 2 components, F(1) - the catalytic core - and F(0) - the membrane proton channel. F(1) has five subunits: alpha(3), beta(3), gamma(1), delta(1), epsilon(1). F(0) has three main subunits: a(1), b(2) and c(10-14). The alpha and beta chains form an alternating ring which encloses part of the gamma chain. F(1) is attached to F(0) by a central stalk formed by the gamma and epsilon chains, while a peripheral stalk is formed by the delta and b chains.

It localises to the cell inner membrane. Its function is as follows. F(1)F(0) ATP synthase produces ATP from ADP in the presence of a proton or sodium gradient. F-type ATPases consist of two structural domains, F(1) containing the extramembraneous catalytic core and F(0) containing the membrane proton channel, linked together by a central stalk and a peripheral stalk. During catalysis, ATP synthesis in the catalytic domain of F(1) is coupled via a rotary mechanism of the central stalk subunits to proton translocation. Component of the F(0) channel, it forms part of the peripheral stalk, linking F(1) to F(0). The protein is ATP synthase subunit b 2 of Nitrosospira multiformis (strain ATCC 25196 / NCIMB 11849 / C 71).